The following is a 154-amino-acid chain: 6,7-dimethyl-8-ribityllumazine synthase (154 aa).

5-amino-6-(D-ribitylamino)uracil-binding positions include Phe26, 60 to 62 (ALE), and 84 to 86 (CII). 89–90 (ET) contacts (2S)-2-hydroxy-3-oxobutyl phosphate. The active-site Proton donor is the His92. Asn117 is a 5-amino-6-(D-ribitylamino)uracil binding site. Arg131 contributes to the (2S)-2-hydroxy-3-oxobutyl phosphate binding site.

This sequence belongs to the DMRL synthase family.

It catalyses the reaction (2S)-2-hydroxy-3-oxobutyl phosphate + 5-amino-6-(D-ribitylamino)uracil = 6,7-dimethyl-8-(1-D-ribityl)lumazine + phosphate + 2 H2O + H(+). Its pathway is cofactor biosynthesis; riboflavin biosynthesis; riboflavin from 2-hydroxy-3-oxobutyl phosphate and 5-amino-6-(D-ribitylamino)uracil: step 1/2. Functionally, catalyzes the formation of 6,7-dimethyl-8-ribityllumazine by condensation of 5-amino-6-(D-ribitylamino)uracil with 3,4-dihydroxy-2-butanone 4-phosphate. This is the penultimate step in the biosynthesis of riboflavin. The polypeptide is 6,7-dimethyl-8-ribityllumazine synthase (Paracidovorax citrulli (strain AAC00-1) (Acidovorax citrulli)).